The sequence spans 1066 residues: Zinc finger and BTB domain-containing protein 21 (1066 aa).

A BTB domain is found at 30–96; it reads CDVLLIVGDQ…IYSSSLFVEK (67 aa). Residues 30 to 96 are mediates homodimerization; sequence CDVLLIVGDQ…IYSSSLFVEK (67 aa). Lys-40 is covalently cross-linked (Glycyl lysine isopeptide (Lys-Gly) (interchain with G-Cter in SUMO1); alternate). A Glycyl lysine isopeptide (Lys-Gly) (interchain with G-Cter in SUMO2); alternate cross-link involves residue Lys-40. A compositionally biased stretch (polar residues) spans 154–177; it reads SRNEAQGKTVSQNQPDVSHTSRPS. A disordered region spans residues 154–196; that stretch reads SRNEAQGKTVSQNQPDVSHTSRPSPSIAVKANTNKPHVPKPIE. Residues Lys-255, Lys-266, Lys-273, Lys-312, and Lys-337 each participate in a glycyl lysine isopeptide (Lys-Gly) (interchain with G-Cter in SUMO2) cross-link. Phosphoserine occurs at positions 345 and 381. Lys-383 is covalently cross-linked (Glycyl lysine isopeptide (Lys-Gly) (interchain with G-Cter in SUMO2)). Positions 388–399 are enriched in basic and acidic residues; that stretch reads DCSEKTALDDRP. 3 disordered regions span residues 388–442, 454–485, and 498–525; these read DCSE…DPSD, TAAASSSSVTRDLSLKTEDDQKDMSRLPAKRR, and KVNEHGSPVSEDNFEEGSSPTLLDADFP. Phosphoserine is present on residues Ser-411 and Ser-422. Lys-430 is covalently cross-linked (Glycyl lysine isopeptide (Lys-Gly) (interchain with G-Cter in SUMO2)). At Thr-431 the chain carries Phosphothreonine. Phosphoserine is present on residues Ser-434, Ser-435, and Ser-438. Positions 466 to 478 are enriched in basic and acidic residues; that stretch reads LSLKTEDDQKDMS. Residues Lys-469 and Lys-475 each participate in a glycyl lysine isopeptide (Lys-Gly) (interchain with G-Cter in SUMO2) cross-link. 2 consecutive C2H2-type zinc fingers follow at residues 546–569 and 575–598; these read FKCKHCLKIFRSTAGLHRHVNMYH and YACDICHKRFHTNFKVWTHCQTQH. Phosphoserine is present on Ser-605. Glycyl lysine isopeptide (Lys-Gly) (interchain with G-Cter in SUMO2) cross-links involve residues Lys-617, Lys-643, and Lys-659. The segment at 670 to 692 adopts a C2H2-type 3 zinc-finger fold; sequence YICTYCGKAYRFLSQFKQHIKMH. Residue Lys-702 forms a Glycyl lysine isopeptide (Lys-Gly) (interchain with G-Cter in SUMO2) linkage. The residue at position 714 (Ser-714) is a Phosphoserine. The C2H2-type 4; atypical zinc-finger motif lies at 748-770; sequence AVCPYCSLRFFSPELKQEHESKC. Residues Lys-763 and Lys-785 each participate in a glycyl lysine isopeptide (Lys-Gly) (interchain with G-Cter in SUMO2) cross-link. The segment at 775 to 798 adopts a C2H2-type 5 zinc-finger fold; it reads LTCLECMRTFKSSFSIWRHQVEVH. The interval 806–840 is disordered; the sequence is TENFSLPVLDHNGDVTGSSRPQSQPEPNKVNHIVT. Residues 820-831 are compositionally biased toward polar residues; that stretch reads VTGSSRPQSQPE. A Glycyl lysine isopeptide (Lys-Gly) (interchain with G-Cter in SUMO2) cross-link involves residue Lys-875. Lys-879 participates in a covalent cross-link: Glycyl lysine isopeptide (Lys-Gly) (interchain with G-Cter in SUMO1); alternate. Lys-879 participates in a covalent cross-link: Glycyl lysine isopeptide (Lys-Gly) (interchain with G-Cter in SUMO2); alternate. The tract at residues 879–906 is disordered; sequence KEEPVEEAEEEAPEASTAPKEAGPSKEA. Residues 882-891 show a composition bias toward acidic residues; sequence PVEEAEEEAP. A C2H2-type 6; atypical zinc finger spans residues 909 to 932; that stretch reads WPCEKCGKMFTVHKQLERHQELLC. Lys-935 participates in a covalent cross-link: Glycyl lysine isopeptide (Lys-Gly) (interchain with G-Cter in SUMO2). Residues 937-959 form a C2H2-type 7 zinc finger; sequence FICHVCNKAFRTNFRLWSHFQSH. The disordered stretch occupies residues 963-1014; that stretch reads ASEESAHKESEVCPVPTNSPSPPPLPPPPPLPKIQPLEPDSPTGLSENPTPA. Residues 979–995 are compositionally biased toward pro residues; the sequence is TNSPSPPPLPPPPPLPK. Ser-1003 is modified (phosphoserine). Residues 1043 to 1065 form a C2H2-type 8 zinc finger; that stretch reads FMCKLCHRTFKTAFSLWSHEQTH.

In terms of assembly, homodimer. Interacts with ZBTB14. In terms of tissue distribution, ubiquitous in fetal and adult tissues.

The protein localises to the nucleus. Functionally, acts as a transcription repressor. This Homo sapiens (Human) protein is Zinc finger and BTB domain-containing protein 21 (ZBTB21).